Here is a 513-residue protein sequence, read N- to C-terminus: Probable cytosol aminopeptidase (513 aa).

Lys-277 and Asp-282 together coordinate Mn(2+). Lys-289 is a catalytic residue. Mn(2+) contacts are provided by Asp-300, Asp-359, and Glu-361. Arg-363 is a catalytic residue.

The protein belongs to the peptidase M17 family. It depends on Mn(2+) as a cofactor.

It localises to the cytoplasm. It carries out the reaction Release of an N-terminal amino acid, Xaa-|-Yaa-, in which Xaa is preferably Leu, but may be other amino acids including Pro although not Arg or Lys, and Yaa may be Pro. Amino acid amides and methyl esters are also readily hydrolyzed, but rates on arylamides are exceedingly low.. It catalyses the reaction Release of an N-terminal amino acid, preferentially leucine, but not glutamic or aspartic acids.. Presumably involved in the processing and regular turnover of intracellular proteins. Catalyzes the removal of unsubstituted N-terminal amino acids from various peptides. This is Probable cytosol aminopeptidase from Mycobacterium sp. (strain JLS).